The sequence spans 877 residues: Clumping factor B (877 aa).

The first 44 residues, 1–44 (MKKRIDYLSNKQNKYSIRRFTVGTTSVIVGATILFGIGNHQAQA), serve as a signal peptide directing secretion. Residues 15 to 26 (YSIRRFTVGTTS) carry the YSIRK-G/S signaling motif motif. 2 stretches are compositionally biased toward polar residues: residues 44–61 (ASEQ…NASA) and 68–95 (MIET…NVDS). Residues 44 to 192 (ASEQSNDTTQ…QGTSKPSVRT (149 aa)) form a disordered region. Residues 45 to 542 (SEQSNDTTQS…GSADGDSAVN (498 aa)) are ligand binding A region. The segment covering 96-119 (TTKPMSTQTSNTTTTEPASTNETP) has biased composition (low complexity). Positions 120 to 189 (QPTAIKNQAT…SNAQGTSKPS (70 aa)) are enriched in polar residues. The short motif at 272 to 276 (DYSNS) is the MIDAS-like motif element. The segment at 530 to 849 (YGGGSADGDS…ETGDKSENTN (320 aa)) is disordered. The span at 545–555 (DPTPGPPVDPE) shows a compositional bias: pro residues. The segment covering 556-801 (PSPDPEPEPT…SDSDSDSDSD (246 aa)) has biased composition (acidic residues). A compositionally biased stretch (polar residues) spans 805-816 (RVTPPNNEQKAP). Basic and acidic residues predominate over residues 833–846 (HKTDALPETGDKSE). Residues 838–842 (LPETG) carry the LPXTG sorting signal motif. Thr-841 is modified (pentaglycyl murein peptidoglycan amidated threonine). The propeptide at 842–877 (GDKSENTNATLFGAMMALLGSLLLFRKRKQDHKEKA) is removed by sortase.

The protein belongs to the serine-aspartate repeat-containing protein (SDr) family. Post-translationally, proteolytically cleaved by aureolysin (aur). This cleavage leads to the inactivation of ClfB.

The protein resides in the secreted. It localises to the cell wall. Its function is as follows. Cell surface-associated protein implicated in virulence by promoting bacterial attachment to both alpha- and beta-chains of human fibrinogen and inducing the formation of bacterial clumps. The chain is Clumping factor B (clfB) from Staphylococcus aureus (strain Mu50 / ATCC 700699).